We begin with the raw amino-acid sequence, 139 residues long: D-ribose pyranase (139 aa).

The Proton donor role is filled by His-20. Residues Asp-28, His-106, and 128-130 (YAN) each bind substrate.

It belongs to the RbsD / FucU family. RbsD subfamily. As to quaternary structure, homodecamer.

Its subcellular location is the cytoplasm. The catalysed reaction is beta-D-ribopyranose = beta-D-ribofuranose. It participates in carbohydrate metabolism; D-ribose degradation; D-ribose 5-phosphate from beta-D-ribopyranose: step 1/2. Its function is as follows. Catalyzes the interconversion of beta-pyran and beta-furan forms of D-ribose. The chain is D-ribose pyranase from Vibrio cholerae serotype O1 (strain ATCC 39541 / Classical Ogawa 395 / O395).